We begin with the raw amino-acid sequence, 348 residues long: Dihydroorotase (348 aa).

Zn(2+) contacts are provided by histidine 17 and histidine 19. Residues 19–21 and asparagine 45 contribute to the substrate site; that span reads HLR. Lysine 103, histidine 140, and histidine 178 together coordinate Zn(2+). Lysine 103 bears the N6-carboxylysine mark. Histidine 140 lines the substrate pocket. Leucine 223 contributes to the substrate binding site. Aspartate 251 provides a ligand contact to Zn(2+). The active site involves aspartate 251. Substrate-binding residues include histidine 255 and alanine 267.

This sequence belongs to the metallo-dependent hydrolases superfamily. DHOase family. Class II DHOase subfamily. In terms of assembly, homodimer. Zn(2+) serves as cofactor.

It carries out the reaction (S)-dihydroorotate + H2O = N-carbamoyl-L-aspartate + H(+). It functions in the pathway pyrimidine metabolism; UMP biosynthesis via de novo pathway; (S)-dihydroorotate from bicarbonate: step 3/3. Its function is as follows. Catalyzes the reversible cyclization of carbamoyl aspartate to dihydroorotate. This chain is Dihydroorotase, found in Yersinia pestis.